The primary structure comprises 188 residues: dCTP deaminase (188 aa).

Residues 111-116 (KSTYAR), 135-137 (TLE), glutamine 156, tyrosine 170, and glutamine 180 contribute to the dCTP site. Catalysis depends on glutamate 137, which acts as the Proton donor/acceptor.

This sequence belongs to the dCTP deaminase family. Homotrimer.

The catalysed reaction is dCTP + H2O + H(+) = dUTP + NH4(+). The protein operates within pyrimidine metabolism; dUMP biosynthesis; dUMP from dCTP (dUTP route): step 1/2. Its function is as follows. Catalyzes the deamination of dCTP to dUTP. The protein is dCTP deaminase of Herminiimonas arsenicoxydans.